A 309-amino-acid polypeptide reads, in one-letter code: Transcription initiation factor IIB 1 (309 aa).

2 tandem repeats follow at residues 125-208 (NELE…LREL) and 219-300 (DYVT…ELTQ).

Belongs to the TFIIB family.

Stabilizes TBP binding to an archaeal box-A promoter. Also responsible for recruiting RNA polymerase II to the pre-initiation complex (DNA-TBP-TFIIB). The protein is Transcription initiation factor IIB 1 of Saccharolobus solfataricus (strain ATCC 35092 / DSM 1617 / JCM 11322 / P2) (Sulfolobus solfataricus).